A 129-amino-acid chain; its full sequence is Small ribosomal subunit protein uS11 (129 aa).

This sequence belongs to the universal ribosomal protein uS11 family. In terms of assembly, part of the 30S ribosomal subunit. Interacts with proteins S7 and S18. Binds to IF-3.

In terms of biological role, located on the platform of the 30S subunit, it bridges several disparate RNA helices of the 16S rRNA. Forms part of the Shine-Dalgarno cleft in the 70S ribosome. This is Small ribosomal subunit protein uS11 from Bacillus mycoides (strain KBAB4) (Bacillus weihenstephanensis).